Consider the following 473-residue polypeptide: Glutathione reductase, mitochondrial (473 aa).

Positions 30 and 31 each coordinate FAD. S30 serves as a coordination point for glutathione. Residue R37 participates in glutathione binding. FAD-binding residues include E50, T57, C58, and K66. C58 and C63 form a disulfide bridge. Glutathione is bound at residue Y114. Position 130 (A130) interacts with FAD. A190, I193, E196, R213, R219, and G279 together coordinate NADP(+). D320 provides a ligand contact to FAD. Residue L326 coordinates NADP(+). T328 is a binding site for FAD. Residue R336 coordinates glutathione. An NADP(+)-binding site is contributed by V359. Residue H456 participates in FAD binding. Residue H456 is the Proton acceptor of the active site.

It belongs to the class-I pyridine nucleotide-disulfide oxidoreductase family. FAD is required as a cofactor. Expressed at all larval stages and in adults in intestine, vulva muscle, pharynx and some cells in the tail.

Its subcellular location is the cytoplasm. It is found in the mitochondrion. It catalyses the reaction 2 glutathione + NADP(+) = glutathione disulfide + NADPH + H(+). Catalyzes the reduction of glutathione disulfide (GSSG) to reduced glutathione (GSH). Constitutes the major mechanism to maintain a high GSH:GSSG ratio in the cytosol. Involved in resistance to oxidative stress and starvation. Together with thioredoxin reductase txtr-1, required for the reduction of disulfide groups in the cuticle during molting. This Caenorhabditis elegans protein is Glutathione reductase, mitochondrial.